We begin with the raw amino-acid sequence, 62 residues long: Cytochrome b-c1 complex subunit 6-2, mitochondrial (62 aa).

Intrachain disulfides connect Cys-17/Cys-59 and Cys-31/Cys-45.

This sequence belongs to the UQCRH/QCR6 family. As to quaternary structure, component of the ubiquinol-cytochrome c oxidoreductase (cytochrome b-c1 complex, complex III, CIII), a multisubunit enzyme composed of 10 subunits. The complex is composed of 3 respiratory subunits cytochrome b (MT-CYB), cytochrome c1 (CYC1-1 or CYC1-2) and Rieske protein (UCR1-1 or UCR1-2), 2 core protein subunits MPPalpha1 (or MPPalpha2) and MPPB, and 5 low-molecular weight protein subunits QCR7-1 (or QCR7-2), UCRQ-1 (or UCRQ-2), QCR9, UCRY and probably QCR6-1 (or QCR6-2). The complex exists as an obligatory dimer and forms supercomplexes (SCs) in the inner mitochondrial membrane with NADH-ubiquinone oxidoreductase (complex I, CI), resulting in different assemblies (supercomplexes SCI(1)III(2) and SCI(2)III(4)).

The protein resides in the mitochondrion inner membrane. Its function is as follows. Component of the ubiquinol-cytochrome c oxidoreductase, a multisubunit transmembrane complex that is part of the mitochondrial electron transport chain which drives oxidative phosphorylation. The respiratory chain contains 3 multisubunit complexes succinate dehydrogenase (complex II, CII), ubiquinol-cytochrome c oxidoreductase (cytochrome b-c1 complex, complex III, CIII) and cytochrome c oxidase (complex IV, CIV), that cooperate to transfer electrons derived from NADH and succinate to molecular oxygen, creating an electrochemical gradient over the inner membrane that drives transmembrane transport and the ATP synthase. The cytochrome b-c1 complex catalyzes electron transfer from ubiquinol to cytochrome c, linking this redox reaction to translocation of protons across the mitochondrial inner membrane, with protons being carried across the membrane as hydrogens on the quinol. In the process called Q cycle, 2 protons are consumed from the matrix, 4 protons are released into the intermembrane space and 2 electrons are passed to cytochrome c. The sequence is that of Cytochrome b-c1 complex subunit 6-2, mitochondrial (QCR6-2) from Arabidopsis thaliana (Mouse-ear cress).